We begin with the raw amino-acid sequence, 252 residues long: Chitooligosaccharide deacetylase (252 aa).

2 residues coordinate Mg(2+): His61 and His125.

It belongs to the YdjC deacetylase family. ChbG subfamily. In terms of assembly, homodimer. Requires Mg(2+) as cofactor.

The protein resides in the cytoplasm. The enzyme catalyses N,N'-diacetylchitobiose + H2O = N-acetyl-beta-D-glucosaminyl-(1-&gt;4)-D-glucosamine + acetate. It catalyses the reaction diacetylchitobiose-6'-phosphate + H2O = N'-monoacetylchitobiose-6'-phosphate + acetate. The protein operates within glycan degradation; chitin degradation. In terms of biological role, involved in the degradation of chitin. ChbG is essential for growth on the acetylated chitooligosaccharides chitobiose and chitotriose but is dispensable for growth on cellobiose and chitosan dimer, the deacetylated form of chitobiose. Deacetylation of chitobiose-6-P and chitotriose-6-P is necessary for both the activation of the chb promoter by the regulatory protein ChbR and the hydrolysis of phosphorylated beta-glucosides by the phospho-beta-glucosidase ChbF. Catalyzes the removal of only one acetyl group from chitobiose-6-P to yield monoacetylchitobiose-6-P, the inducer of ChbR and the substrate of ChbF. This is Chitooligosaccharide deacetylase from Salmonella dublin (strain CT_02021853).